The chain runs to 1119 residues: Isoleucine--tRNA ligase (1119 aa).

Residues 1–43 (MVPRRSRQRPASSCRTAKTARREMPYPLPAPDGQEPEAQPVTP) form a disordered region. The 'HIGH' region motif lies at 84–94 (PFANGLPHYGH). The 'KMSKS' region motif lies at 676–680 (KVSKS). An ATP-binding site is contributed by Lys679.

Belongs to the class-I aminoacyl-tRNA synthetase family. IleS type 2 subfamily. In terms of assembly, monomer. The cofactor is Zn(2+).

It is found in the cytoplasm. It carries out the reaction tRNA(Ile) + L-isoleucine + ATP = L-isoleucyl-tRNA(Ile) + AMP + diphosphate. Its function is as follows. Catalyzes the attachment of isoleucine to tRNA(Ile). As IleRS can inadvertently accommodate and process structurally similar amino acids such as valine, to avoid such errors it has two additional distinct tRNA(Ile)-dependent editing activities. One activity is designated as 'pretransfer' editing and involves the hydrolysis of activated Val-AMP. The other activity is designated 'posttransfer' editing and involves deacylation of mischarged Val-tRNA(Ile). This chain is Isoleucine--tRNA ligase, found in Leifsonia xyli subsp. xyli (strain CTCB07).